Reading from the N-terminus, the 137-residue chain is DDRSHILAIWPSVASHGADYGGEALYRLFLSNPQTKTYFPNFDFHKDSPQIKAHGKKVVDALTEASKHLDNINGALSKLFDLHAFELRVDPGNFPLLAHHINVTIAVMFPDDKFDIAHHQLDKFLAAVGGSLTSKYR.

A Globin domain is found at 1-137; the sequence is DDRSHILAIW…VGGSLTSKYR (137 aa). H54 lines the O2 pocket. H83 serves as a coordination point for heme b.

It belongs to the globin family. In terms of processing, the N-terminus of the mature protein is acetylated. As to expression, red blood cells.

This Telmatobius peruvianus (Andean frog) protein is Hemoglobin subunit alpha-2.